The chain runs to 359 residues: Biotin synthase (359 aa).

Residues 67 to 302 (CCGNRVDLCS…QQILRYAGGR (236 aa)) enclose the Radical SAM core domain. [4Fe-4S] cluster is bound by residues cysteine 85, cysteine 89, and cysteine 92. Residues cysteine 130, cysteine 167, cysteine 227, and arginine 297 each contribute to the [2Fe-2S] cluster site.

It belongs to the radical SAM superfamily. Biotin synthase family. Homodimer. [4Fe-4S] cluster serves as cofactor. The cofactor is [2Fe-2S] cluster.

It carries out the reaction (4R,5S)-dethiobiotin + (sulfur carrier)-SH + 2 reduced [2Fe-2S]-[ferredoxin] + 2 S-adenosyl-L-methionine = (sulfur carrier)-H + biotin + 2 5'-deoxyadenosine + 2 L-methionine + 2 oxidized [2Fe-2S]-[ferredoxin]. Its pathway is cofactor biosynthesis; biotin biosynthesis; biotin from 7,8-diaminononanoate: step 2/2. Its function is as follows. Catalyzes the conversion of dethiobiotin (DTB) to biotin by the insertion of a sulfur atom into dethiobiotin via a radical-based mechanism. The protein is Biotin synthase of Gloeothece citriformis (strain PCC 7424) (Cyanothece sp. (strain PCC 7424)).